A 134-amino-acid chain; its full sequence is Cytochrome b (134 aa).

A run of 3 helical transmembrane segments spans residues 33 to 53 (FGSLLGVCLIIQILTGLFLAM), 77 to 98 (WLIRYLHANGASMFFICLFLHV), and 113 to 133 (WNIGVLLLFAVMATAFMGYVL). The heme b site is built by His83 and His97.

Belongs to the cytochrome b family. As to quaternary structure, the cytochrome bc1 complex contains 11 subunits: 3 respiratory subunits (MT-CYB, CYC1 and UQCRFS1), 2 core proteins (UQCRC1 and UQCRC2) and 6 low-molecular weight proteins (UQCRH/QCR6, UQCRB/QCR7, UQCRQ/QCR8, UQCR10/QCR9, UQCR11/QCR10 and a cleavage product of UQCRFS1). This cytochrome bc1 complex then forms a dimer. It depends on heme b as a cofactor.

The protein resides in the mitochondrion inner membrane. Its function is as follows. Component of the ubiquinol-cytochrome c reductase complex (complex III or cytochrome b-c1 complex) that is part of the mitochondrial respiratory chain. The b-c1 complex mediates electron transfer from ubiquinol to cytochrome c. Contributes to the generation of a proton gradient across the mitochondrial membrane that is then used for ATP synthesis. This is Cytochrome b (MT-CYB) from Sorex shinto sadonis (Sado shrew).